A 278-amino-acid chain; its full sequence is Proline-rich 28 kDa antigen homolog (278 aa).

The first 28 residues, 1 to 28, serve as a signal peptide directing secretion; the sequence is MIQSTQTWRVLAGGLAATAMGVTVFAGG.

It to M.tuberculosis Rv0040c.

The chain is Proline-rich 28 kDa antigen homolog from Mycobacterium leprae (strain TN).